Consider the following 676-residue polypeptide: Mediator of RNA polymerase II transcription subunit 17 (676 aa).

2 disordered regions span residues 27–68 and 117–176; these read IGSK…QFSN and IEND…TQDT. Over residues 29–40 the composition is skewed to low complexity; sequence SKSTSPHSNSTS. Composition is skewed to basic and acidic residues over residues 47–56 and 120–134; these read HNTENEEVDN and DNGK…KAED. Positions 135–145 are enriched in acidic residues; it reads GIDTMDIDQND. The span at 146–160 shows a compositional bias: polar residues; sequence NSEANTNDIGYNEWS.

This sequence belongs to the Mediator complex subunit 17 family. In terms of assembly, component of the Mediator complex.

It is found in the nucleus. Its function is as follows. Component of the Mediator complex, a coactivator involved in the regulated transcription of nearly all RNA polymerase II-dependent genes. Mediator functions as a bridge to convey information from gene-specific regulatory proteins to the basal RNA polymerase II transcription machinery. Mediator is recruited to promoters by direct interactions with regulatory proteins and serves as a scaffold for the assembly of a functional preinitiation complex with RNA polymerase II and the general transcription factors. The chain is Mediator of RNA polymerase II transcription subunit 17 (SRB4) from Candida glabrata (strain ATCC 2001 / BCRC 20586 / JCM 3761 / NBRC 0622 / NRRL Y-65 / CBS 138) (Yeast).